The sequence spans 436 residues: GDP-mannose 6-dehydrogenase (436 aa).

NAD(+)-binding residues include Tyr-10, Val-11, Asp-30, Lys-35, Thr-86, and Thr-124. GDP-alpha-D-mannuronate contacts are provided by Glu-161, Lys-210, Asn-214, His-217, Asn-225, Tyr-256, Tyr-257, Arg-259, Phe-262, and Gly-265. Catalysis depends on Cys-268, which acts as the Nucleophile. Lys-271 is an NAD(+) binding site. Positions 278-295 are inter-domain linker; that stretch reads YRASQLDVEHPMLGSLMR. Residue Lys-324 participates in GDP-alpha-D-mannuronate binding. NAD(+) is bound at residue Arg-331.

This sequence belongs to the UDP-glucose/GDP-mannose dehydrogenase family. Forms a domain-swapped dimer with each peptide contributing to each active site. The dimers assemble further. X-ray structures indicate this enzyme exists as a homotetramer PubMed:12705829, but kinetic and physical results obtained in PubMed:2470755 and PubMed:12135385 indicate that it is probably a homohexamer.

The enzyme catalyses GDP-alpha-D-mannose + 2 NAD(+) + H2O = GDP-alpha-D-mannuronate + 2 NADH + 3 H(+). Its pathway is glycan biosynthesis; alginate biosynthesis. Its activity is regulated as follows. Inhibited by GMP, ATP, GDP-D-glucose and maltose. Inhibited by GMP and deamidoNAD. Functionally, catalyzes the oxidation of guanosine diphospho-D-mannose (GDP-D-mannose) to GDP-D-mannuronic acid, a precursor for alginate polymerization. The alginate layer causes a mucoid phenotype and provides a protective barrier against host immune defenses and antibiotics. Other sugars are not used as substrates. In Pseudomonas aeruginosa (strain ATCC 15692 / DSM 22644 / CIP 104116 / JCM 14847 / LMG 12228 / 1C / PRS 101 / PAO1), this protein is GDP-mannose 6-dehydrogenase.